A 307-amino-acid chain; its full sequence is Probable inactive peptidyl-prolyl cis-trans isomerase-like 6 (307 aa).

The region spanning 141 to 304 (FLDISIDLYP…QNCVITASGQ (164 aa)) is the PPIase cyclophilin-type domain.

Belongs to the cyclophilin-type PPIase family.

Functionally, probable inactive PPIase with no peptidyl-prolyl cis-trans isomerase activity. This chain is Probable inactive peptidyl-prolyl cis-trans isomerase-like 6, found in Bos taurus (Bovine).